We begin with the raw amino-acid sequence, 127 residues long: Ribonuclease P protein component (127 aa).

The tract at residues 99–127 (ALSASLRQQLRDGIDRSARRQEPAAERQR) is disordered. A compositionally biased stretch (basic and acidic residues) spans 107-127 (QLRDGIDRSARRQEPAAERQR).

The protein belongs to the RnpA family. Consists of a catalytic RNA component (M1 or rnpB) and a protein subunit.

The catalysed reaction is Endonucleolytic cleavage of RNA, removing 5'-extranucleotides from tRNA precursor.. In terms of biological role, RNaseP catalyzes the removal of the 5'-leader sequence from pre-tRNA to produce the mature 5'-terminus. It can also cleave other RNA substrates such as 4.5S RNA. The protein component plays an auxiliary but essential role in vivo by binding to the 5'-leader sequence and broadening the substrate specificity of the ribozyme. This is Ribonuclease P protein component from Mycobacteroides abscessus (strain ATCC 19977 / DSM 44196 / CCUG 20993 / CIP 104536 / JCM 13569 / NCTC 13031 / TMC 1543 / L948) (Mycobacterium abscessus).